We begin with the raw amino-acid sequence, 251 residues long: Triosephosphate isomerase (251 aa).

Residues Asn-12 and Lys-14 each contribute to the substrate site. His-96 serves as the catalytic Electrophile. Catalysis depends on Glu-168, which acts as the Proton acceptor.

It belongs to the triosephosphate isomerase family. In terms of assembly, homodimer.

It localises to the cytoplasm. Its subcellular location is the glycosome. The catalysed reaction is D-glyceraldehyde 3-phosphate = dihydroxyacetone phosphate. It participates in carbohydrate biosynthesis; gluconeogenesis. The protein operates within carbohydrate degradation; glycolysis; D-glyceraldehyde 3-phosphate from glycerone phosphate: step 1/1. The protein is Triosephosphate isomerase of Leishmania mexicana.